Consider the following 312-residue polypeptide: D-alanine--D-alanine ligase (312 aa).

Residues 108–308 (KLVWQQTGIP…YSELVVKVLS (201 aa)) form the ATP-grasp domain. 138–193 (AAKLGVPLFVKPASEGSSVAVEKVKSADALPAALEEAAKHDKIVIVEKSIEGGGEY) lines the ATP pocket. 3 residues coordinate Mg(2+): D262, E275, and N277.

The protein belongs to the D-alanine--D-alanine ligase family. Requires Mg(2+) as cofactor. It depends on Mn(2+) as a cofactor.

Its subcellular location is the cytoplasm. It catalyses the reaction 2 D-alanine + ATP = D-alanyl-D-alanine + ADP + phosphate + H(+). It functions in the pathway cell wall biogenesis; peptidoglycan biosynthesis. Cell wall formation. This chain is D-alanine--D-alanine ligase, found in Burkholderia pseudomallei (strain 668).